A 51-amino-acid polypeptide reads, in one-letter code: Bacteriochlorophyll e-binding protein (51 aa).

His-25 is an a bacteriochlorophyll e binding site.

Belongs to the BChl C/E-binding protein family.

The protein localises to the chlorosome. It localises to the chlorosome envelope. Functionally, component of the photosynthetic apparatus. The light harvesting B740 complex binds bacteriochlorophyll e. This Chlorobium phaeovibrioides protein is Bacteriochlorophyll e-binding protein (csmA).